Here is a 443-residue protein sequence, read N- to C-terminus: Probable D-serine dehydratase (443 aa).

N6-(pyridoxal phosphate)lysine is present on K116.

This sequence belongs to the serine/threonine dehydratase family. DsdA subfamily. It depends on pyridoxal 5'-phosphate as a cofactor.

It carries out the reaction D-serine = pyruvate + NH4(+). The polypeptide is Probable D-serine dehydratase (Bacillus cereus (strain AH187)).